Reading from the N-terminus, the 168-residue chain is Large ribosomal subunit protein uL10 (168 aa).

Belongs to the universal ribosomal protein uL10 family. As to quaternary structure, part of the ribosomal stalk of the 50S ribosomal subunit. The N-terminus interacts with L11 and the large rRNA to form the base of the stalk. The C-terminus forms an elongated spine to which L12 dimers bind in a sequential fashion forming a multimeric L10(L12)X complex.

Its function is as follows. Forms part of the ribosomal stalk, playing a central role in the interaction of the ribosome with GTP-bound translation factors. The protein is Large ribosomal subunit protein uL10 (rplJ) of Buchnera aphidicola subsp. Baizongia pistaciae (strain Bp).